A 269-amino-acid chain; its full sequence is Formamidopyrimidine-DNA glycosylase (269 aa).

Pro2 serves as the catalytic Schiff-base intermediate with DNA. Glu3 acts as the Proton donor in catalysis. Catalysis depends on Lys57, which acts as the Proton donor; for beta-elimination activity. DNA is bound by residues His90, Arg109, and Lys150. The FPG-type zinc finger occupies 235–269 (QVYGRKGEPCRVCGTPIVATKHAQRATFYCRQCQK). The Proton donor; for delta-elimination activity role is filled by Arg259.

Belongs to the FPG family. As to quaternary structure, monomer. Zn(2+) serves as cofactor.

It carries out the reaction Hydrolysis of DNA containing ring-opened 7-methylguanine residues, releasing 2,6-diamino-4-hydroxy-5-(N-methyl)formamidopyrimidine.. The enzyme catalyses 2'-deoxyribonucleotide-(2'-deoxyribose 5'-phosphate)-2'-deoxyribonucleotide-DNA = a 3'-end 2'-deoxyribonucleotide-(2,3-dehydro-2,3-deoxyribose 5'-phosphate)-DNA + a 5'-end 5'-phospho-2'-deoxyribonucleoside-DNA + H(+). Involved in base excision repair of DNA damaged by oxidation or by mutagenic agents. Acts as a DNA glycosylase that recognizes and removes damaged bases. Has a preference for oxidized purines, such as 7,8-dihydro-8-oxoguanine (8-oxoG). Has AP (apurinic/apyrimidinic) lyase activity and introduces nicks in the DNA strand. Cleaves the DNA backbone by beta-delta elimination to generate a single-strand break at the site of the removed base with both 3'- and 5'-phosphates. The chain is Formamidopyrimidine-DNA glycosylase from Escherichia coli O157:H7.